The primary structure comprises 761 residues: Ribonucleoside-diphosphate reductase subunit alpha (761 aa).

The region spanning 5 to 95 (LFVTKRDGRK…IFHLRKKAYG (91 aa)) is the ATP-cone domain. ATP contacts are provided by residues lysine 9, 15-21 (EKINLDK), threonine 55, and lysine 91. Threonine 209 contacts GDP. Cysteine 225 and cysteine 462 form a disulfide bridge. DTTP is bound by residues 232–234 (DSL), arginine 262, and arginine 269. Asparagine 437 is a binding site for GDP. Residue asparagine 437 is the Proton acceptor of the active site. Cysteine 439 (cysteine radical intermediate) is an active-site residue. Residues glutamate 441 and 623–625 (ETS) contribute to the GDP site. The active-site Proton acceptor is the glutamate 441.

It belongs to the ribonucleoside diphosphate reductase large chain family. Tetramer of two alpha and two beta subunits.

It carries out the reaction a 2'-deoxyribonucleoside 5'-diphosphate + [thioredoxin]-disulfide + H2O = a ribonucleoside 5'-diphosphate + [thioredoxin]-dithiol. With respect to regulation, under complex allosteric control mediated by deoxynucleoside triphosphates and ATP binding to separate specificity and activation sites on the alpha subunit. The type of nucleotide bound at the specificity site determines substrate preference. It seems probable that ATP makes the enzyme reduce CDP and UDP, dGTP favors ADP reduction and dTTP favors GDP reduction. Stimulated by ATP and inhibited by dATP binding to the activity site. Functionally, provides the precursors necessary for DNA synthesis. Catalyzes the biosynthesis of deoxyribonucleotides from the corresponding ribonucleotides. This is Ribonucleoside-diphosphate reductase subunit alpha (nrdA) from Buchnera aphidicola subsp. Acyrthosiphon pisum (strain APS) (Acyrthosiphon pisum symbiotic bacterium).